The chain runs to 245 residues: Octopine transport system permease protein OccM (245 aa).

Transmembrane regions (helical) follow at residues 12–32 (FIALLAGIPLALKLAVFSIAV), 57–77 (FYIFAFRGTPLLVQIYIIYYG), 96–116 (AYWCALGALALNTAAYSAEIM), 163–183 (VLMVKSTSLASTITLMEITGI), and 199–219 (ACAGAIYLTMNFIAARLFALI). The ABC transmembrane type-1 domain maps to 19-216 (IPLALKLAVF…TMNFIAARLF (198 aa)).

This sequence belongs to the binding-protein-dependent transport system permease family. HisMQ subfamily.

The protein localises to the cell inner membrane. In terms of biological role, component of the octopine active transport system probably consisting of four subunits: Q, M, P and T. This Rhizobium meliloti (Ensifer meliloti) protein is Octopine transport system permease protein OccM (occM).